The sequence spans 773 residues: Ribosomal protein S6 kinase alpha-4 (773 aa).

The region spanning 33-301 (FALLKVLGTG…AQEVKSHPFF (269 aa)) is the Protein kinase 1 domain. Residues 39–47 (LGTGAYGKV) and Lys-65 contribute to the ATP site. Residue Asp-161 is the Proton acceptor of the active site. Ser-196 bears the Phosphoserine; by autocatalysis mark. In terms of domain architecture, AGC-kinase C-terminal spans 302–371 (QGLDWVALAA…VAPSILFDHN (70 aa)). Ser-343 bears the Phosphoserine; by MAPK1, MAPK3 and MAPK14 mark. Ser-347 bears the Phosphoserine mark. Phosphoserine; by autocatalysis occurs at positions 360 and 365. ATP is bound by residues 417–425 (LGQGSFSVC) and Lys-440. Residues 417-674 (LGQGSFSVCR…LEGLRSSSWL (258 aa)) form the Protein kinase 2 domain. Residue Asp-530 is the Proton acceptor of the active site. Thr-542 is modified (phosphothreonine). Thr-568 carries the phosphothreonine; by MAPK1, MAPK3 and MAPK14 modification. Phosphoserine occurs at positions 634 and 678. Disordered stretches follow at residues 674–696 (LQDGSARSSPPLRTPDVLESSGP) and 728–773 (AKRR…LSPS). Thr-687 carries the phosphothreonine modification. Phosphoserine; by autocatalysis occurs at positions 737 and 745.

It belongs to the protein kinase superfamily. AGC Ser/Thr protein kinase family. S6 kinase subfamily. Forms a complex with either MAPK1/ERK2 or MAPK3/ERK1 in quiescent cells which transiently dissociates following mitogenic stimulation. Also associates with MAPK14/p38-alpha. Activated RPS6KA4 associates with and phosphorylates the NF-kappa-B p65 subunit RELA. The cofactor is Mg(2+). Post-translationally, ser-343 and Thr-568 phosphorylation is required for kinase activity. Ser-343 and Ser-196 are autophosphorylated by the C-terminal kinase domain, and their phosphorylation is essential for the catalytic activity of the N-terminal kinase domain. Phosphorylated at Ser-343, Thr-568 and Thr-687 by MAPK1/ERK2, MAPK3/ERK1 and MAPK14/p38-alpha. Autophosphorylated at Ser-737 and Ser-745 by the N-terminal kinase domain.

It localises to the nucleus. It catalyses the reaction L-seryl-[protein] + ATP = O-phospho-L-seryl-[protein] + ADP + H(+). The enzyme catalyses L-threonyl-[protein] + ATP = O-phospho-L-threonyl-[protein] + ADP + H(+). Its activity is regulated as follows. Activated by phosphorylation at Ser-343, Thr-568 and Thr-687 by MAPK1/ERK2, MAPK3/ERK1 and MAPK14/p38-alpha, and by further autophosphorylation of Ser-196, Ser-360 and Ser-365 by the activated C-terminal kinase domain. In terms of biological role, serine/threonine-protein kinase that is required for the mitogen or stress-induced phosphorylation of the transcription factors CREB1 and ATF1 and for the regulation of the transcription factor RELA, and that contributes to gene activation by histone phosphorylation and functions in the regulation of inflammatory genes. Phosphorylates CREB1 and ATF1 in response to mitogenic or stress stimuli such as UV-C irradiation, epidermal growth factor (EGF) and anisomycin. Plays an essential role in the control of RELA transcriptional activity in response to TNF. Phosphorylates 'Ser-10' of histone H3 in response to mitogenics, stress stimuli and EGF, which results in the transcriptional activation of several immediate early genes, including proto-oncogenes c-fos/FOS and c-jun/JUN. May also phosphorylate 'Ser-28' of histone H3. Mediates the mitogen- and stress-induced phosphorylation of high mobility group protein 1 (HMGN1/HMG14). In lipopolysaccharide-stimulated primary macrophages, acts downstream of the Toll-like receptor TLR4 to limit the production of pro-inflammatory cytokines. Functions probably by inducing transcription of the MAP kinase phosphatase DUSP1 and the anti-inflammatory cytokine interleukin 10 (IL10), via CREB1 and ATF1 transcription factors. This Mus musculus (Mouse) protein is Ribosomal protein S6 kinase alpha-4 (Rps6ka4).